Consider the following 501-residue polypeptide: Circadian clock oscillator protein KaiC (501 aa).

KaiC domains lie at 1-232 (MQVQ…ITVF) and 246-501 (IRIS…REKK). Positions 34, 35, 36, 37, 38, 74, 209, 210, 211, 213, 215, 275, 276, 277, 278, 279, and 280 each coordinate ATP. A Mg(2+)-binding site is contributed by Thr38. Mg(2+) is bound by residues Thr280 and Glu303. Trp316 contacts ATP. Ser416 bears the Phosphoserine; by autocatalysis mark. Residue Thr417 is modified to Phosphothreonine; by autocatalysis. ATP-binding residues include Arg436, Lys442, Met443, Arg444, Ser446, His448, and Lys450.

This sequence belongs to the KaiC family. In terms of assembly, homohexamer; hexamerization is dependent on ATP-binding. Component of the KaiBC complex. KaiC interacts with SasA, activating its autokinase function and leading to RpaA activation. The cofactor is Mg(2+). Post-translationally, phosphorylated on serine and threonine residues by autocatalysis. Has a 4 step phosphorylation cycle; the autokinase acts first on Thr-417, then Ser-416. When Ser-416 is modified KaiC switches to an autophosphatase mode, acting first on phospho-Thr-417 then phospho-Ser-416.

It catalyses the reaction L-seryl-[protein] + ATP = O-phospho-L-seryl-[protein] + ADP + H(+). The enzyme catalyses L-threonyl-[protein] + ATP = O-phospho-L-threonyl-[protein] + ADP + H(+). The catalysed reaction is ATP + H2O = ADP + phosphate + H(+). In terms of biological role, central component of the KaiBC oscillator complex, which constitutes the main circadian regulator in cyanobacteria. Its composition changes during the circadian cycle to control KaiC phosphorylation. Autophosphorylates and has a weak ATPase activity; ATPase activity defines the circadian period. This Prochlorococcus marinus (strain SARG / CCMP1375 / SS120) protein is Circadian clock oscillator protein KaiC.